We begin with the raw amino-acid sequence, 178 residues long: Transmembrane protein 196 (178 aa).

Helical transmembrane passes span 11-31, 47-67, 73-93, and 106-126; these read LLVL…VGAV, SSPV…ILCA, LVMI…ILNF, and LYPL…GCTL.

As to expression, expression is significantly decreased in lung cancer cells compared to normal lung tissue (at protein level).

The protein localises to the cytoplasm. Its subcellular location is the membrane. Its function is as follows. Acts as a tumor suppressor in lung cancer. Inhibits tumor cell growth by inhibiting cell proliferation and migration and promoting cell apoptosis. Inhibits metastasis of lung cancer by suppressing beta-catenin expression in the Wnt/beta-catenin signaling pathway. This is Transmembrane protein 196 (TMEM196) from Homo sapiens (Human).